We begin with the raw amino-acid sequence, 546 residues long: Chaperonin GroEL (546 aa).

ATP contacts are provided by residues 30 to 33, Lys51, 87 to 91, Gly415, 479 to 481, and Asp495; these read TLGP, DGTTT, and NAA. The disordered stretch occupies residues 527-546; it reads DESAAPAMPGGMGGMGDMGM. A compositionally biased stretch (gly residues) spans 536–546; sequence GGMGGMGDMGM.

It belongs to the chaperonin (HSP60) family. In terms of assembly, forms a cylinder of 14 subunits composed of two heptameric rings stacked back-to-back. Interacts with the co-chaperonin GroES.

The protein localises to the cytoplasm. It carries out the reaction ATP + H2O + a folded polypeptide = ADP + phosphate + an unfolded polypeptide.. Together with its co-chaperonin GroES, plays an essential role in assisting protein folding. The GroEL-GroES system forms a nano-cage that allows encapsulation of the non-native substrate proteins and provides a physical environment optimized to promote and accelerate protein folding. The protein is Chaperonin GroEL of Acidovorax ebreus (strain TPSY) (Diaphorobacter sp. (strain TPSY)).